The sequence spans 172 residues: 3-phenylpropionate/cinnamic acid dioxygenase subunit beta (172 aa).

This sequence belongs to the bacterial ring-hydroxylating dioxygenase beta subunit family. In terms of assembly, this dioxygenase system consists of four proteins: the two subunits of the hydroxylase component (HcaE and HcaF), a ferredoxin (HcaC) and a ferredoxin reductase (HcaD).

The enzyme catalyses 3-phenylpropanoate + NADH + O2 + H(+) = 3-(cis-5,6-dihydroxycyclohexa-1,3-dien-1-yl)propanoate + NAD(+). It catalyses the reaction (E)-cinnamate + NADH + O2 + H(+) = (2E)-3-(cis-5,6-dihydroxycyclohexa-1,3-dien-1-yl)prop-2-enoate + NAD(+). Its pathway is aromatic compound metabolism; 3-phenylpropanoate degradation. Its function is as follows. Part of the multicomponent 3-phenylpropionate dioxygenase. Converts 3-phenylpropionic acid (PP) and cinnamic acid (CI) into 3-phenylpropionate-dihydrodiol (PP-dihydrodiol) and cinnamic acid-dihydrodiol (CI-dihydrodiol), respectively. This chain is 3-phenylpropionate/cinnamic acid dioxygenase subunit beta, found in Escherichia coli O157:H7.